The chain runs to 552 residues: Chaperonin GroEL 1 (552 aa).

ATP is bound by residues 30–33 (TLGP), lysine 51, 87–91 (DGTTT), glycine 415, 479–481 (NAA), and aspartate 495.

Belongs to the chaperonin (HSP60) family. As to quaternary structure, forms a cylinder of 14 subunits composed of two heptameric rings stacked back-to-back. Interacts with the co-chaperonin GroES.

It localises to the cytoplasm. The catalysed reaction is ATP + H2O + a folded polypeptide = ADP + phosphate + an unfolded polypeptide.. Its function is as follows. Together with its co-chaperonin GroES, plays an essential role in assisting protein folding. The GroEL-GroES system forms a nano-cage that allows encapsulation of the non-native substrate proteins and provides a physical environment optimized to promote and accelerate protein folding. This Albidiferax ferrireducens (strain ATCC BAA-621 / DSM 15236 / T118) (Rhodoferax ferrireducens) protein is Chaperonin GroEL 1.